Here is an 804-residue protein sequence, read N- to C-terminus: DNA gyrase subunit A (804 aa).

A Topo IIA-type catalytic domain is found at 31–495; sequence IPDVRDGLKP…QSIEYNEEEL (465 aa). Tyrosine 119 serves as the catalytic O-(5'-phospho-DNA)-tyrosine intermediate. The short motif at 522-528 is the GyrA-box element; that stretch reads QKRGGKG.

Belongs to the type II topoisomerase GyrA/ParC subunit family. In terms of assembly, heterotetramer, composed of two GyrA and two GyrB chains. In the heterotetramer, GyrA contains the active site tyrosine that forms a transient covalent intermediate with DNA, while GyrB binds cofactors and catalyzes ATP hydrolysis.

Its subcellular location is the cytoplasm. The enzyme catalyses ATP-dependent breakage, passage and rejoining of double-stranded DNA.. Functionally, a type II topoisomerase that negatively supercoils closed circular double-stranded (ds) DNA in an ATP-dependent manner to modulate DNA topology and maintain chromosomes in an underwound state. Negative supercoiling favors strand separation, and DNA replication, transcription, recombination and repair, all of which involve strand separation. Also able to catalyze the interconversion of other topological isomers of dsDNA rings, including catenanes and knotted rings. Type II topoisomerases break and join 2 DNA strands simultaneously in an ATP-dependent manner. The chain is DNA gyrase subunit A from Thermotoga maritima (strain ATCC 43589 / DSM 3109 / JCM 10099 / NBRC 100826 / MSB8).